The sequence spans 476 residues: Abscisic acid 8'-hydroxylase CYP707A1 (476 aa).

The chain crosses the membrane as a helical span at residues 5–25 (FEIFLYISMFVLGYLSYYFCF). C422 is a heme binding site.

This sequence belongs to the cytochrome P450 family. The cofactor is heme. As to expression, expressed in ovaries (specifically in ovules and placenta), sepals, petals and pedicels.

It is found in the membrane. The catalysed reaction is 2-cis-(+)-abscisate + reduced [NADPH--hemoprotein reductase] + O2 = (+)-8'-hydroxyabscisate + oxidized [NADPH--hemoprotein reductase] + H2O + H(+). It functions in the pathway plant hormone degradation; abscisic acid degradation. In terms of biological role, involved in the oxidative degradation of abscisic acid, especially in pollinated ovaries. This chain is Abscisic acid 8'-hydroxylase CYP707A1, found in Solanum lycopersicum (Tomato).